Here is a 381-residue protein sequence, read N- to C-terminus: Probable tRNA sulfurtransferase (381 aa).

The 109-residue stretch at 60–168 folds into the THUMP domain; that stretch reads REATEVLTRV…EGKAYIFVDK (109 aa). Residues 186–187, Lys-269, Gly-291, and Gln-300 contribute to the ATP site; that span reads LL.

This sequence belongs to the ThiI family.

It is found in the cytoplasm. It carries out the reaction [ThiI sulfur-carrier protein]-S-sulfanyl-L-cysteine + a uridine in tRNA + 2 reduced [2Fe-2S]-[ferredoxin] + ATP + H(+) = [ThiI sulfur-carrier protein]-L-cysteine + a 4-thiouridine in tRNA + 2 oxidized [2Fe-2S]-[ferredoxin] + AMP + diphosphate. The catalysed reaction is [ThiS sulfur-carrier protein]-C-terminal Gly-Gly-AMP + S-sulfanyl-L-cysteinyl-[cysteine desulfurase] + AH2 = [ThiS sulfur-carrier protein]-C-terminal-Gly-aminoethanethioate + L-cysteinyl-[cysteine desulfurase] + A + AMP + 2 H(+). Its pathway is cofactor biosynthesis; thiamine diphosphate biosynthesis. In terms of biological role, catalyzes the ATP-dependent transfer of a sulfur to tRNA to produce 4-thiouridine in position 8 of tRNAs, which functions as a near-UV photosensor. Also catalyzes the transfer of sulfur to the sulfur carrier protein ThiS, forming ThiS-thiocarboxylate. This is a step in the synthesis of thiazole, in the thiamine biosynthesis pathway. The sulfur is donated as persulfide by IscS. The chain is Probable tRNA sulfurtransferase from Thermococcus kodakarensis (strain ATCC BAA-918 / JCM 12380 / KOD1) (Pyrococcus kodakaraensis (strain KOD1)).